The primary structure comprises 157 residues: 3-hydroxyacyl-[acyl-carrier-protein] dehydratase FabZ (157 aa).

The active site involves His-58.

This sequence belongs to the thioester dehydratase family. FabZ subfamily.

The protein localises to the cytoplasm. It carries out the reaction a (3R)-hydroxyacyl-[ACP] = a (2E)-enoyl-[ACP] + H2O. Functionally, involved in unsaturated fatty acids biosynthesis. Catalyzes the dehydration of short chain beta-hydroxyacyl-ACPs and long chain saturated and unsaturated beta-hydroxyacyl-ACPs. The sequence is that of 3-hydroxyacyl-[acyl-carrier-protein] dehydratase FabZ from Rhizobium rhizogenes (strain K84 / ATCC BAA-868) (Agrobacterium radiobacter).